The primary structure comprises 470 residues: UTP--glucose-1-phosphate uridylyltransferase 1 (470 aa).

Ala-2 carries the N-acetylalanine modification. UTP is bound by residues 86-89 (LNGG), Lys-100, Gln-163, and Gly-192. 88-89 (GG) is a substrate binding site. Substrate-binding positions include His-193 and 221–223 (NSD). UTP-binding residues include Asp-223 and Lys-361.

The protein belongs to the UDPGP type 1 family. As to expression, expressed in roots, rosette leaves, cauline leaves, stems, flowers and siliques.

Its subcellular location is the cytoplasm. It carries out the reaction alpha-D-glucose 1-phosphate + UTP + H(+) = UDP-alpha-D-glucose + diphosphate. Converts glucose 1-phosphate to UDP-glucose, which is the major glycosyl donor for polysaccharides. Acts redundantly with UGP2 and is essential for the synthesis of sucrose, starch and cell wall, and callose deposition. Involved in the regulation of the programmed cell death (PCD) induced by the fungal toxin fumonisin B1 (FB1). In Arabidopsis thaliana (Mouse-ear cress), this protein is UTP--glucose-1-phosphate uridylyltransferase 1.